Reading from the N-terminus, the 106-residue chain is uncharacterized protein (106 aa).

The protein belongs to the csb family.

This is an uncharacterized protein from Dictyostelium discoideum (Social amoeba).